Consider the following 255-residue polypeptide: Ribosome maturation factor RimP (255 aa).

Residues 177–255 are disordered; the sequence is LRRGSAPPQD…ARLKNRDTLH (79 aa). A compositionally biased stretch (acidic residues) spans 186–202; sequence DGEDVDEEAGEAPEDEV. Over residues 216–230 the composition is skewed to basic and acidic residues; sequence PKMDKKSDKKSDKPV.

Belongs to the RimP family.

The protein resides in the cytoplasm. Functionally, required for maturation of 30S ribosomal subunits. This Methylorubrum populi (strain ATCC BAA-705 / NCIMB 13946 / BJ001) (Methylobacterium populi) protein is Ribosome maturation factor RimP.